A 340-amino-acid polypeptide reads, in one-letter code: MYG1 protein C27H6.8 (340 aa).

This sequence belongs to the MYG1 family.

The sequence is that of MYG1 protein C27H6.8 from Caenorhabditis elegans.